A 350-amino-acid chain; its full sequence is Putative deoxyribonuclease-2 (350 aa).

This sequence belongs to the DNase II family.

In Burkholderia pseudomallei (strain 1710b), this protein is Putative deoxyribonuclease-2.